The primary structure comprises 215 residues: MLEDEKITDAQSGEADPAITPSSVASASAKKHKKKKKKKAGEGKDDQQRETKTTEGETAKQETSELTPDEQLSRELDWCIEQLELGLRTQKTSSKQREEASRALKTLRSSKAPLVKKRQVMRAISGDYRKKIEEEKNRQFKLIQSAMTSARVTTVSECKPVFHRRAERNTQPKNKTDGSQETQSSQETNEHTKTEDTKPFVFTKTHDEFCFDFDL.

Disordered stretches follow at residues 1 to 72 (MLED…DEQL), 87 to 111 (LRTQ…RSSK), and 158 to 199 (CKPV…DTKP). Residues 29-39 (AKKHKKKKKKK) are compositionally biased toward basic residues. Residues 40 to 63 (AGEGKDDQQRETKTTEGETAKQET) show a composition bias toward basic and acidic residues. 2 stretches are compositionally biased toward basic and acidic residues: residues 167-178 (ERNTQPKNKTDG) and 188-199 (TNEHTKTEDTKP).

Belongs to the UPF0488 family.

The chain is UPF0488 protein C8orf33 homolog from Danio rerio (Zebrafish).